The chain runs to 264 residues: Type III pantothenate kinase (264 aa).

6–13 (DIGNTQTV) is a binding site for ATP. Substrate is bound by residues tyrosine 100 and 107 to 110 (GADR). Aspartate 109 (proton acceptor) is an active-site residue. K(+) is bound at residue aspartate 129. ATP is bound at residue threonine 132. Threonine 185 serves as a coordination point for substrate.

This sequence belongs to the type III pantothenate kinase family. As to quaternary structure, homodimer. Requires NH4(+) as cofactor. The cofactor is K(+).

The protein localises to the cytoplasm. It carries out the reaction (R)-pantothenate + ATP = (R)-4'-phosphopantothenate + ADP + H(+). Its pathway is cofactor biosynthesis; coenzyme A biosynthesis; CoA from (R)-pantothenate: step 1/5. In terms of biological role, catalyzes the phosphorylation of pantothenate (Pan), the first step in CoA biosynthesis. This chain is Type III pantothenate kinase, found in Rubrobacter xylanophilus (strain DSM 9941 / JCM 11954 / NBRC 16129 / PRD-1).